Reading from the N-terminus, the 494-residue chain is Cytochrome P450 2A6 (494 aa).

Residues phenylalanine 107 and asparagine 297 each coordinate substrate. Cysteine 439 serves as a coordination point for heme.

It belongs to the cytochrome P450 family. Heme is required as a cofactor. Liver.

Its subcellular location is the endoplasmic reticulum membrane. It localises to the microsome membrane. The catalysed reaction is 1,4-cineole + reduced [NADPH--hemoprotein reductase] + O2 = 2-exo-hydroxy-1,4-cineole + oxidized [NADPH--hemoprotein reductase] + H2O + H(+). In terms of biological role, exhibits a high coumarin 7-hydroxylase activity. Can act in the hydroxylation of the anti-cancer drugs cyclophosphamide and ifosphamide. Competent in the metabolic activation of aflatoxin B1. Constitutes the major nicotine C-oxidase. Acts as a 1,4-cineole 2-exo-monooxygenase. Possesses low phenacetin O-deethylation activity. The protein is Cytochrome P450 2A6 (CYP2A6) of Homo sapiens (Human).